The sequence spans 327 residues: Thiamine thiazole synthase (327 aa).

Substrate contacts are provided by residues Cys86, 107–108 (EA), Gly115, and Val182. At Cys216 the chain carries 2,3-didehydroalanine (Cys). Residues Asp218, His233, Met285, and 295-297 (RMG) contribute to the substrate site.

This sequence belongs to the THI4 family. In terms of assembly, homooctamer. Fe cation is required as a cofactor. During the catalytic reaction, a sulfide is transferred from Cys-216 to a reaction intermediate, generating a dehydroalanine residue.

Its subcellular location is the cytoplasm. It is found in the nucleus. It catalyses the reaction [ADP-thiazole synthase]-L-cysteine + glycine + NAD(+) = [ADP-thiazole synthase]-dehydroalanine + ADP-5-ethyl-4-methylthiazole-2-carboxylate + nicotinamide + 3 H2O + 2 H(+). Its function is as follows. Involved in biosynthesis of the thiamine precursor thiazole. Catalyzes the conversion of NAD and glycine to adenosine diphosphate 5-(2-hydroxyethyl)-4-methylthiazole-2-carboxylic acid (ADT), an adenylated thiazole intermediate. The reaction includes an iron-dependent sulfide transfer from a conserved cysteine residue of the protein to a thiazole intermediate. The enzyme can only undergo a single turnover, which suggests it is a suicide enzyme. May have additional roles in adaptation to various stress conditions and in DNA damage tolerance. The sequence is that of Thiamine thiazole synthase from Aspergillus oryzae (strain ATCC 42149 / RIB 40) (Yellow koji mold).